Here is a 280-residue protein sequence, read N- to C-terminus: 4-deoxy-L-threo-5-hexosulose-uronate ketol-isomerase (280 aa).

Residues His198, His200, Glu205, and His247 each contribute to the Zn(2+) site.

The protein belongs to the KduI family. Requires Zn(2+) as cofactor.

It is found in the cytoplasm. It catalyses the reaction 5-dehydro-4-deoxy-D-glucuronate = 3-deoxy-D-glycero-2,5-hexodiulosonate. Isomerase involved in ulvan degradation. Ulvan is the main polysaccharide component of the Ulvales (green seaweed) cell wall. It is composed of disaccharide building blocks comprising 3-sulfated rhamnose (Rha3S) linked to D-glucuronic acid (GlcA), L-iduronic acid (IduA), or D-xylose (Xyl). Catalyzes the isomerization of 5-dehydro-4-deoxy-D-glucuronate to 3-deoxy-D-glycero-2,5-hexodiulosonate. The sequence is that of 4-deoxy-L-threo-5-hexosulose-uronate ketol-isomerase from Formosa agariphila (strain DSM 15362 / KCTC 12365 / LMG 23005 / KMM 3901 / M-2Alg 35-1).